Here is a 681-residue protein sequence, read N- to C-terminus: tRNA wybutosine-synthesizing protein 4 (681 aa).

Basic residues predominate over residues 1–11; it reads MSNKNQRKTKS. Residues 1 to 21 are disordered; that stretch reads MSNKNQRKTKSKDREVRKTND. S-adenosyl-L-methionine is bound by residues arginine 66, glycine 92, aspartate 119, 165–166, and glutamate 193; that span reads NL.

Belongs to the methyltransferase superfamily. LCMT family.

It carries out the reaction 7-[(3S)-3-amino-3-carboxypropyl]wyosine(37) in tRNA(Phe) + S-adenosyl-L-methionine = 7-[(3S)-(3-amino-3-methoxycarbonyl)propyl]wyosine(37) in tRNA(Phe) + S-adenosyl-L-homocysteine. The catalysed reaction is 7-[(3S)-(3-amino-3-methoxycarbonyl)propyl]wyosine(37) in tRNA(Phe) + S-adenosyl-L-methionine + CO2 = wybutosine(37) in tRNA(Phe) + S-adenosyl-L-homocysteine + 2 H(+). It functions in the pathway tRNA modification; wybutosine-tRNA(Phe) biosynthesis. In terms of biological role, probable S-adenosyl-L-methionine-dependent methyltransferase that acts as a component of the wybutosine biosynthesis pathway. Wybutosine is a hyper modified guanosine with a tricyclic base found at the 3'-position adjacent to the anticodon of eukaryotic phenylalanine tRNA. May methylate the carboxyl group of leucine residues to form alpha-leucine ester residues. The chain is tRNA wybutosine-synthesizing protein 4 (ppm2) from Schizosaccharomyces pombe (strain 972 / ATCC 24843) (Fission yeast).